A 992-amino-acid chain; its full sequence is Ankyrin repeat domain-containing protein 18A (992 aa).

5 ANK repeats span residues 67–96 (KDRTVLHLACAHGRVQVVTLLLHRRCQIDI), 100–129 (LNRTPLMKAVHSQEEACAIVLLECGANPNI), 133–162 (YGNTALHYAVYNKGTSLAERLLSHHANIEA), 166–195 (EGNTPLLFAINSRRQHMVEFLLKNQANIHA), and 199–228 (FKRTALILAVQHNLSSIVTLLLQQNIRISS). The interval 262-320 (NHLRNDNQETAAMKPANLKKRKERAKAEHNLKVASEEKQERLQRSENKQPQDSQSYGKK) is disordered. Coiled-coil stretches lie at residues 278–310 (NLKKRKERAKAEHNLKVASEEKQERLQRSENKQ), 378–618 (KMIT…AERE), 683–713 (ISLLNYTADQIRKKNRELEEEATGYKKCLEM), and 743–899 (FKKL…EAFA). Basic and acidic residues predominate over residues 286–310 (AKAEHNLKVASEEKQERLQRSENKQ).

The sequence is that of Ankyrin repeat domain-containing protein 18A (ANKRD18A) from Homo sapiens (Human).